The primary structure comprises 348 residues: UDP-3-O-acylglucosamine N-acyltransferase (348 aa).

The Proton acceptor role is filled by His243.

It belongs to the transferase hexapeptide repeat family. LpxD subfamily. As to quaternary structure, homotrimer.

The catalysed reaction is a UDP-3-O-[(3R)-3-hydroxyacyl]-alpha-D-glucosamine + a (3R)-hydroxyacyl-[ACP] = a UDP-2-N,3-O-bis[(3R)-3-hydroxyacyl]-alpha-D-glucosamine + holo-[ACP] + H(+). The protein operates within bacterial outer membrane biogenesis; LPS lipid A biosynthesis. In terms of biological role, catalyzes the N-acylation of UDP-3-O-acylglucosamine using 3-hydroxyacyl-ACP as the acyl donor. Is involved in the biosynthesis of lipid A, a phosphorylated glycolipid that anchors the lipopolysaccharide to the outer membrane of the cell. The chain is UDP-3-O-acylglucosamine N-acyltransferase from Hahella chejuensis (strain KCTC 2396).